The chain runs to 589 residues: PTS system mannitol-specific EIICB component (589 aa).

At 1-25 (MEEKVSLKVRVQKLGTSLSNMVMPN) the chain is on the cytoplasmic side. A PTS EIIC type-2 domain is found at 14 to 347 (LGTSLSNMVM…LHADKSTEDS (334 aa)). A helical transmembrane segment spans residues 26–47 (IGAFIAWGVLTALFIADGYLPN). The Extracellular segment spans residues 48 to 51 (EQLA). A helical transmembrane segment spans residues 52 to 72 (TVVGPMLTYLLPILIGYTGGY). The Cytoplasmic segment spans residues 73-135 (MIHGQRGAVV…PGFEMLVNNF (63 aa)). Residues 136–157 (SAGLVGFALLLLAFYAIGPVVS) form a helical membrane-spanning segment. The Extracellular segment spans residues 158–166 (TLTGAVGNG). The chain crosses the membrane as a helical span at residues 167–187 (VEAIVNARLLPMANIIIEPAK). Over 188–274 (VLFLNNALNH…VMMKPTLFLA (87 aa)) the chain is Cytoplasmic. Residues 275 to 294 (AMAGGISGTFTFQLLDAGLK) traverse the membrane as a helical segment. Residues 295-316 (SPASPGSIIAIMATAPKGVWPH) lie on the Extracellular side of the membrane. A helical transmembrane segment spans residues 317-338 (LNILLGVLVAAVVSFLIAALIL). Residues 339–589 (HADKSTEDSL…YDKMAARMYK (251 aa)) are Cytoplasmic-facing. The region spanning 381–476 (EKIIFACDAG…SLTGASPIAE (96 aa)) is the PTS EIIB type-2 domain. C387 acts as the Phosphocysteine intermediate; for EIIB activity in catalysis. C387 is subject to Phosphocysteine; by EIIA.

Homodimer.

The protein resides in the cell membrane. The catalysed reaction is D-mannitol(out) + N(pros)-phospho-L-histidyl-[protein] = D-mannitol 1-phosphate(in) + L-histidyl-[protein]. Its function is as follows. The phosphoenolpyruvate-dependent sugar phosphotransferase system (sugar PTS), a major carbohydrate active transport system, catalyzes the phosphorylation of incoming sugar substrates concomitantly with their translocation across the cell membrane. The enzyme II CmtAB PTS system is involved in D-mannitol transport. This is PTS system mannitol-specific EIICB component (mtlA) from Streptococcus pneumoniae (strain ATCC BAA-255 / R6).